We begin with the raw amino-acid sequence, 566 residues long: Type IV pilus assembly ATPase PilB (566 aa).

Residue 326–333 (GPTGSGKT) coordinates ATP. C459, C462, C494, and C497 together coordinate Zn(2+).

The protein belongs to the GSP E family. As to quaternary structure, homohexamer. Interacts with PilC. Interacts with FimX; this interaction positively regulates T4P assembly and twitching motility by promoting the activity of the PilB ATPase.

It localises to the cytoplasm. ATPase component of the type IV pilus (T4P) that plays a role in surface and host cell adhesion, colonization, biofilm maturation, virulence, and twitching, a form of surface-associated motility facilitated by cycles of extension, adhesion, and retraction of T4P fibers. Acts as a molecular motor to provide the energy that is required for biogenesis of the pilus and the extrusion of substrates generated in the cytoplasm. PilB ATPase activity is also essential for T4P extension while antagonist PilT ATPase activity is required for T4P retraction. The polypeptide is Type IV pilus assembly ATPase PilB (pilB) (Pseudomonas aeruginosa (strain ATCC 15692 / DSM 22644 / CIP 104116 / JCM 14847 / LMG 12228 / 1C / PRS 101 / PAO1)).